We begin with the raw amino-acid sequence, 430 residues long: Adenylosuccinate synthetase (430 aa).

GTP is bound by residues 12–18 (GDEGKGK) and 40–42 (GHT). Aspartate 13 serves as the catalytic Proton acceptor. Residues aspartate 13 and glycine 40 each contribute to the Mg(2+) site. IMP-binding positions include 13–16 (DEGK), 38–41 (NAGH), threonine 129, arginine 143, glutamine 224, threonine 239, and arginine 303. Histidine 41 functions as the Proton donor in the catalytic mechanism. Position 299–305 (299–305 (ATTGRRR)) interacts with substrate. GTP-binding positions include arginine 305, 331–333 (KLD), and 413–415 (SVG).

Belongs to the adenylosuccinate synthetase family. Homodimer. It depends on Mg(2+) as a cofactor.

The protein localises to the cytoplasm. It catalyses the reaction IMP + L-aspartate + GTP = N(6)-(1,2-dicarboxyethyl)-AMP + GDP + phosphate + 2 H(+). It functions in the pathway purine metabolism; AMP biosynthesis via de novo pathway; AMP from IMP: step 1/2. Plays an important role in the de novo pathway of purine nucleotide biosynthesis. Catalyzes the first committed step in the biosynthesis of AMP from IMP. The sequence is that of Adenylosuccinate synthetase from Desulfatibacillum aliphaticivorans.